Here is an 89-residue protein sequence, read N- to C-terminus: NADH-ubiquinone oxidoreductase chain 4L (89 aa).

The next 3 helical transmembrane spans lie at 1–21 (MNIT…NRKN), 22–42 (IILM…LILV), and 57–77 (IYII…LVAF).

This sequence belongs to the complex I subunit 4L family.

Its subcellular location is the mitochondrion membrane. The catalysed reaction is a ubiquinone + NADH + 5 H(+)(in) = a ubiquinol + NAD(+) + 4 H(+)(out). Functionally, core subunit of the mitochondrial membrane respiratory chain NADH dehydrogenase (Complex I) that is believed to belong to the minimal assembly required for catalysis. Complex I functions in the transfer of electrons from NADH to the respiratory chain. The immediate electron acceptor for the enzyme is believed to be ubiquinone. In Neurospora crassa (strain ATCC 24698 / 74-OR23-1A / CBS 708.71 / DSM 1257 / FGSC 987), this protein is NADH-ubiquinone oxidoreductase chain 4L (ndh-4L).